Consider the following 47-residue polypeptide: Lysis protein for colicin E9 (47 aa).

A signal peptide spans 1–19 (MKKITGIILLLLAAIILAA). A lipid anchor (N-palmitoyl cysteine) is attached at Cys-20. Cys-20 carries the S-diacylglycerol cysteine lipid modification.

It localises to the cell outer membrane. Functionally, lysis proteins are required for both colicin release and partial cell lysis. The protein is Lysis protein for colicin E9 (lys) of Escherichia coli.